The chain runs to 365 residues: Peptide chain release factor 2 (365 aa).

At Gln-252 the chain carries N5-methylglutamine.

This sequence belongs to the prokaryotic/mitochondrial release factor family. Methylated by PrmC. Methylation increases the termination efficiency of RF2.

The protein resides in the cytoplasm. Its function is as follows. Peptide chain release factor 2 directs the termination of translation in response to the peptide chain termination codons UGA and UAA. The chain is Peptide chain release factor 2 from Yersinia pseudotuberculosis serotype O:1b (strain IP 31758).